The sequence spans 729 residues: Neurochondrin (729 aa).

S2 bears the N-acetylserine mark. S2 carries the phosphoserine modification. S-palmitoyl cysteine attachment occurs at residues C3 and C4. R75 carries the post-translational modification Asymmetric dimethylarginine. S448 is modified (phosphoserine).

This sequence belongs to the neurochondrin family. Interacts with MCHR1. Interacts with SEMA4C. Interacts with DIAPH1 (via FH3 domain). Interacts with GRM5. Palmitoylated. Palmitoylation by ZDHHC1, ZDHHC3 and ZDHHC11 regulates the association of NCDN with endosome membranes. May also be palmitoylated by ZDHHC7. Expressed in brain and in peripheral nervous system (at protein level). Weakly expressed in neurites.

The protein localises to the cytoplasm. It is found in the cytosol. Its subcellular location is the endosome membrane. The protein resides in the cell projection. It localises to the dendrite. The protein localises to the postsynapse. Functionally, probably involved in signal transduction, in the nervous system, via increasing cell surface localization of GRM5 and positively regulating its signaling. Required for the spatial learning process. Acts as a negative regulator of Ca(2+)-calmodulin-dependent protein kinase 2 (CaMK2) phosphorylation. May play a role in modulating melanin-concentrating hormone-mediated functions via its interaction with MCHR1 that interferes with G protein-coupled signal transduction. May be involved in bone metabolism. May also be involved in neurite outgrowth. The chain is Neurochondrin (Ncdn) from Rattus norvegicus (Rat).